The primary structure comprises 183 residues: Ribosome rescue factor SmrB (183 aa).

The Smr domain occupies 98-173; sequence LDLHGLTQKQ…GDAALLVLIE (76 aa).

It belongs to the SmrB family. As to quaternary structure, associates with collided ribosomes, but not with correctly translating polysomes.

Acts as a ribosome collision sensor. Detects stalled/collided disomes (pairs of ribosomes where the leading ribosome is stalled and a second ribosome has collided with it) and endonucleolytically cleaves mRNA at the 5' boundary of the stalled ribosome. Stalled/collided disomes form a new interface (primarily via the 30S subunits) that binds SmrB. Cleaved mRNA becomes available for tmRNA ligation, leading to ribosomal subunit dissociation and rescue of stalled ribosomes. The protein is Ribosome rescue factor SmrB of Erwinia tasmaniensis (strain DSM 17950 / CFBP 7177 / CIP 109463 / NCPPB 4357 / Et1/99).